The chain runs to 794 residues: Protein sel-1 homolog 1 (794 aa).

The first 21 residues, 1-21 (MQVHVGLTLLLCAVLLSSATA), serve as a signal peptide directing secretion. The segment at 20-91 (TASSDDESNQ…EEEVSVGEEI (72 aa)) is disordered. An interaction with ERLEC1, OS9 and SYVN1 region spans residues 22-737 (SSDDESNQDE…DIFTQLDMDQ (716 aa)). Residues 22 to 738 (SSDDESNQDE…IFTQLDMDQL (717 aa)) are Lumenal-facing. 2 stretches are compositionally biased toward acidic residues: residues 23–32 (SDDESNQDES) and 62–77 (DSEDPEVESPLQEEEE). Ser63 carries the phosphoserine modification. The Fibronectin type-II domain maps to 122–170 (AHGEPCHFPFLFLDKEYDECTSDGRQDGRLWCATTYDYKTDEKWGFCET). 2 disulfides stabilise this stretch: Cys127/Cys153 and Cys141/Cys168. 9 Sel1-like repeats span residues 183-218 (AEMIYQAGMKILNGSNRKSQKREAYRYLQKAAGMNH), 219-254 (TKALERVSYALLFGDYLTQNIQAAKEMFEKLTEEGS), 255-290 (PKGQTALGFLYVSGLGVNSSQAKALVYYTFGALGGN), 291-326 (LIAHMVLGYRYWAGIGVLQSCESVLTHYRLVANHVA), 373-409 (VQAQVGLGQLHLHGGRGVEQNHQRAFDYFNLAANAGN), 410-446 (SHAMAFLGKMYSEGSDIVPQSNETALHYFKKAADMGN), 447-482 (PVGQSGLGMAYLYGRGIQVNYDLALKYFQKAAEQGW), 483-518 (VDGQLQLGSMYYNGIGVKRDYKQALKYFNLASQGGH), and 519-554 (ILAFYNLAQMHASGTGVMRSCHTAVELFKNVCERGR). Asn195 and Asn217 each carry an N-linked (GlcNAc...) asparagine glycan. Residue Asn272 is glycosylated (N-linked (GlcNAc...) asparagine). Positions 352–537 (NSGMLEEDLI…MHASGTGVMR (186 aa)) are important for homodimerization and oligomerization. An N-linked (GlcNAc...) asparagine glycan is attached at Asn431. Asn608 carries an N-linked (GlcNAc...) asparagine glycan. Sel1-like repeat units follow at residues 627–662 (TVARIKLGDYHFYGFGTDVDYETAFIHYRLASEQQH) and 664–699 (AQAMFNLGYMHEKGLGIKQDIHLAKRFYDMAAEASP). The tract at residues 643-723 (TDVDYETAFI…VVYFLQYIRE (81 aa)) is interaction with SYVN1. The mediates retention in the endoplasmic reticulum stretch occupies residues 738-794 (LLGPEWDLYLMTIIALLLGTVIAYRQRQHQDVPVPRPPGPWPAPPQQEGPPEQQPPQ). A helical membrane pass occupies residues 739–759 (LGPEWDLYLMTIIALLLGTVI). The Cytoplasmic portion of the chain corresponds to 760-794 (AYRQRQHQDVPVPRPPGPWPAPPQQEGPPEQQPPQ). The segment at 768 to 794 (DVPVPRPPGPWPAPPQQEGPPEQQPPQ) is disordered. Positions 771 to 794 (VPRPPGPWPAPPQQEGPPEQQPPQ) are enriched in pro residues.

This sequence belongs to the sel-1 family. As to quaternary structure, homodimer and homooligomer. May form a complex with ERLEC1, HSPA5, OS9, and SYVN1. Interacts with FOXRED2 and EDEM1. Interacts with LPL and LMF1; may stabilize the complex formed by LPL and LMF1 and thereby promote the export of LPL dimers. Component of the HRD1 complex, which comprises at least SYNV1/HRD1, DERL1/2, FAM8A1, HERPUD1/HERP, OS9, SEL1L and UBE2J1. SYNV1 assembles with SEL1L and FAM8A1 through its transmembrane domains, but interaction with its cytoplasmic domain is required to confer stability to FAM8A1 and enhance recruitment of HERPUD1. The interaction with SYNV1/HRD1 is direct. Post-translationally, N-glycosylated.

It localises to the endoplasmic reticulum membrane. Its function is as follows. Plays a role in the endoplasmic reticulum quality control (ERQC) system also called ER-associated degradation (ERAD) involved in ubiquitin-dependent degradation of misfolded endoplasmic reticulum proteins. Enhances SYVN1 stability. Plays a role in LPL maturation and secretion. Required for normal differentiation of the pancreas epithelium, and for normal exocrine function and survival of pancreatic cells. May play a role in Notch signaling. This chain is Protein sel-1 homolog 1 (Sel1l), found in Mesocricetus auratus (Golden hamster).